Reading from the N-terminus, the 190-residue chain is Hypoxanthine/guanine phosphoribosyltransferase (190 aa).

The protein belongs to the purine/pyrimidine phosphoribosyltransferase family. Archaeal HPRT subfamily. As to quaternary structure, homodimer.

It localises to the cytoplasm. The enzyme catalyses IMP + diphosphate = hypoxanthine + 5-phospho-alpha-D-ribose 1-diphosphate. The catalysed reaction is GMP + diphosphate = guanine + 5-phospho-alpha-D-ribose 1-diphosphate. The protein operates within purine metabolism; IMP biosynthesis via salvage pathway; IMP from hypoxanthine: step 1/1. In terms of biological role, catalyzes a salvage reaction resulting in the formation of IMP that is energically less costly than de novo synthesis. This Methanosalsum zhilinae (strain DSM 4017 / NBRC 107636 / OCM 62 / WeN5) (Methanohalophilus zhilinae) protein is Hypoxanthine/guanine phosphoribosyltransferase.